The following is a 310-amino-acid chain: Proline iminopeptidase (310 aa).

The AB hydrolase-1 domain maps to 33–290 (PVIFLHGGPG…RVVQAGHRAF (258 aa)). Catalysis depends on S107, which acts as the Nucleophile. The active site involves D260. H287 (proton donor) is an active-site residue.

It belongs to the peptidase S33 family.

It localises to the cytoplasm. The enzyme catalyses Release of N-terminal proline from a peptide.. Its function is as follows. Specifically catalyzes the removal of N-terminal proline residues from peptides. In Neisseria meningitidis serogroup A / serotype 4A (strain DSM 15465 / Z2491), this protein is Proline iminopeptidase (pip).